Reading from the N-terminus, the 518-residue chain is Cytochrome P450 709B3 (518 aa).

Residues 3 to 23 traverse the membrane as a helical segment; it reads LISTINLLTIVLLLFVVSKIW. Cys465 contributes to the heme binding site.

This sequence belongs to the cytochrome P450 family. Requires heme as cofactor. Highly expressed in rosette leaves and siliques, and at lower levels in flowers.

The protein localises to the membrane. Its function is as follows. Plays a role in abscisic acid (ABA) and salt stress response. May regulate the salt stress response independently of well-characterized pathways. Does not function as cytokinin hydroxylase in yeast heterologous system. This chain is Cytochrome P450 709B3, found in Arabidopsis thaliana (Mouse-ear cress).